Reading from the N-terminus, the 5206-residue chain is Multifunctional-autoprocessing repeats-in-toxin (5206 aa).

A signal peptide spans 1-19 (MGKPFWRSVEYFFTGNYSA). 39 RtxA repeats span residues 101–118 (GAAGGVSIDHLGNNGDVS), 121–138 (GAAAYNGITRKGLSGNVT), 141–157 (GAGGYNALWHETNQGNL), 161–184 (GAGAGNKLDRTWFNRYQGSRGDVT), 187–204 (GAGAANSISSRVETGNIT), 207–224 (GAGADNHLVRKGKVGDIT), 255–272 (GVGGYNSLYSDVAHGDIH), 275–291 (GGGAYNTITRKGSGSSF), 584–601 (GAGGGNVIKSNVTRGNVY), 604–620 (GGGIANVILHSSQFGNT), 624–641 (GGGAANVIVKSGEEGDLT), 644–658 (GAGLANVLVHQSKQG), 741–753 (AGGANVLTKVGDG), 759–771 (MLGGANVITHISG), 782–798 (ALGGANILTKKGKGNTL), 801–816 (MGGGANVLTHVGDGTT), 820–835 (MVGGANILTKVGNGDT), 841–855 (GVGNVLTHVGDGQTL), 858–875 (MGAAGNIFTKVGDGTSIA), 877–891 (MIGAGNIFTHVGEGN), 896–910 (MGGLGNVFTKVGNGD), 915–932 (MVAEANVFTHIGDGMSVA), 934–950 (MLAKGNVATKVGNGTTL), 972–984 (MIGQANIMTKVGN), 991–1006 (MVGKANIYTHVGDGTS), 1031–1043 (GKANIMTHVGDGL), 1067–1079 (AAAKANVVTHVGD), 1087–1102 (AGKGNILTKVGEGTTV), 1110–1122 (GNVMTHVGDGTTI), 1125–1142 (AKGKANIITKVGDGLGVN), 1145–1159 (WGQANVFTQVGDGDR), 1163–1179 (AKGEANIITKVGDGKEV), 1184–1199 (GKANIITHVGNGDDYT), 1201–1217 (AWGKANVITKVGNGRNV), 1220–1236 (AKGEANIVTQVGDGDSF), 1242–1256 (KGNIVTKVGDGMQVT), 1258–1275 (AKGKANITTTVGDGLSVT), 1296–1313 (AWGKYNINTKVGDGLNVA), and 1315–1332 (MKGKANANIHVGDGLNIN). Over residues 1606-1626 (SQQANAVSEHATQNQASQNAL) the composition is skewed to polar residues. Disordered regions lie at residues 1606-1682 (SQQA…ESEA) and 1738-1895 (IAAA…EQEA). Basic and acidic residues predominate over residues 1627–1646 (SDKERAEADRQRLEQEKQKQ). The segment covering 1652-1671 (GSQSQLESTDQQALGNNGQA) has biased composition (polar residues). Residues 1778–1805 (AEAKADAETRKADAVAKSNDAKQAESDA) are compositionally biased toward basic and acidic residues. Positions 1825–1834 (NKANQAQNDA) are enriched in polar residues. Positions 1835–1849 (KGTKQNEGDRPDREG) are enriched in basic and acidic residues. Positions 1870-1880 (SHITTDSQTNA) are enriched in polar residues. The interval 2377–2461 (ELMSVTELLD…SLLNQVNSRL (85 aa)) is membrane localization region (MLD). The interval 2537–2901 (EYGQVVADTI…HQVTDVLDAL (365 aa)) is rho inactivation domain (RID). Residues 2998-3113 (VVLFLHGSGS…MPSMTKAITA (116 aa)) form an ABH effector region region. Residues 4111 to 4295 (PTADGGESRF…AENNKVSLSW (185 aa)) enclose the Peptidase C80 domain. 1D-myo-inositol hexakisphosphate contacts are provided by residues 4117–4119 (ESR), 4144–4145 (KH), and R4175. H4181 acts as the For cysteine protease activity in catalysis. S4226 is a binding site for 1D-myo-inositol hexakisphosphate. C4230 (nucleophile; for cysteine protease activity) is an active-site residue. 1D-myo-inositol hexakisphosphate is bound by residues 4259 to 4261 (SVR), 4272 to 4273 (RK), K4285, and K4290. 2 disordered regions span residues 4333–4362 (GAIGDNNDVFDAPEKRKAETETSSSSANNK) and 4738–4779 (LKEK…ETPD). A compositionally biased stretch (low complexity) spans 4750–4762 (SSVSVNGASVNSA).

It depends on Mg(2+) as a cofactor.

The protein localises to the secreted. Its subcellular location is the host cytoplasm. It is found in the host cytosol. The protein resides in the host cell membrane. It catalyses the reaction L-lysyl-/S-(2E,6E,10E)-geranylgeranyl-L-cysteinyl-[protein] + hexadecanoyl-CoA = N(6)-hexadecanoyl-L-lysyl-/S-(2E,6E,10E)-geranylgeranyl-L-cysteinyl-[protein] + CoA + H(+). The catalysed reaction is L-lysyl-/S-(2E,6E,10E)-geranylgeranyl-L-cysteinyl-[protein] + dodecanoyl-CoA = N(6)-dodecanoyl-L-lysyl-/S-(2E,6E,10E)-geranylgeranyl-L-cysteinyl-[protein] + CoA + H(+). The enzyme catalyses L-lysyl-/S-(2E,6E,10E)-geranylgeranyl-L-cysteinyl-[protein] + decanoyl-CoA = N(6)-decanoyl-L-lysyl-/S-(2E,6E,10E)-geranylgeranyl-L-cysteinyl-[protein] + CoA + H(+). Precursor of a multifunctional toxin that causes destruction of the actin cytoskeleton by covalent cross-linking of actin and inactivation of Rho GTPases when translocated into the host cytoplasm. Upon translocation into the host cell, undergoes autoprocessing in cis mediated by the peptidase C80 domain (also named CPD domain): the protease activity is activated upon binding inositol hexakisphosphate (InsP6) present at the host cell membrane and delivers the Cysteine protease domain-containing toxin F3 chain to the host cytosol. The Cysteine protease domain-containing toxin F3 chain will then further cleave and release effector toxin chains that cause disassembly of the actin cytoskeleton and enhance V.vulnificus colonization of the small intestine, possibly by facilitating evasion of phagocytic cells. In terms of biological role, following autocatalytic cleavage in cis, this chain mediates processing in trans to release other individual toxin chains to the host cytosol. Released effector toxin chains cause disassembly of the actin cytoskeleton and enhance V.vulnificus colonization of the small intestine, possibly by facilitating evasion of phagocytic cells. Functionally, actin-directed toxin that catalyzes the covalent cross-linking of host cytoplasmic monomeric actin. Mediates the cross-link between 'Lys-50' of one monomer and 'Glu-270' of another actin monomer, resulting in formation of highly toxic actin oligomers that cause cell rounding. The toxin can be highly efficient at very low concentrations by acting on formin homology family proteins: toxic actin oligomers bind with high affinity to formins and adversely affect both nucleation and elongation abilities of formins, causing their potent inhibition in both profilin-dependent and independent manners. Acts as an acid--amino-acid ligase that transfers the gamma-phosphoryl group of ATP to the 'Glu-270' actin residue, resulting in the formation of an activated acyl phosphate intermediate. This intermediate is further hydrolyzed and the energy of hydrolysis is utilized for the formation of the amide bond between actin subunits. Its function is as follows. N-epsilon-fatty acyltransferase that mediates lysine-palmitoylation of host Rho GTPase proteins, with a strong preference for host Rac1. After delivery to the host cytosol, localizes to the host cell membrane where it palmitoylates host Rho GTPase proteins, resulting in loss of all active GTP-bound Rho and subsequent actin depolymerization. Prenylation of host Rac1 at the C-terminus is required for lysine-palmitoylation. Indirectly activates the small GTPase CDC42. This chain is Multifunctional-autoprocessing repeats-in-toxin, found in Vibrio vulnificus.